We begin with the raw amino-acid sequence, 408 residues long: Imidazolonepropionase (408 aa).

Fe(3+)-binding residues include histidine 73 and histidine 75. Zn(2+) is bound by residues histidine 73 and histidine 75. Arginine 82, tyrosine 145, and histidine 178 together coordinate 4-imidazolone-5-propanoate. Tyrosine 145 is a binding site for N-formimidoyl-L-glutamate. Residue histidine 243 participates in Fe(3+) binding. Position 243 (histidine 243) interacts with Zn(2+). Glutamine 246 contributes to the 4-imidazolone-5-propanoate binding site. A Fe(3+)-binding site is contributed by aspartate 318. Aspartate 318 is a Zn(2+) binding site. 2 residues coordinate N-formimidoyl-L-glutamate: asparagine 320 and glycine 322. Serine 323 lines the 4-imidazolone-5-propanoate pocket.

Belongs to the metallo-dependent hydrolases superfamily. HutI family. Zn(2+) serves as cofactor. It depends on Fe(3+) as a cofactor.

The protein resides in the cytoplasm. The catalysed reaction is 4-imidazolone-5-propanoate + H2O = N-formimidoyl-L-glutamate. It functions in the pathway amino-acid degradation; L-histidine degradation into L-glutamate; N-formimidoyl-L-glutamate from L-histidine: step 3/3. Catalyzes the hydrolytic cleavage of the carbon-nitrogen bond in imidazolone-5-propanoate to yield N-formimidoyl-L-glutamate. It is the third step in the universal histidine degradation pathway. This Shewanella woodyi (strain ATCC 51908 / MS32) protein is Imidazolonepropionase.